Here is a 337-residue protein sequence, read N- to C-terminus: Heme A synthase (337 aa).

A run of 5 helical transmembrane segments spans residues 6–26 (ITKWLFVSCIMVIAMVVIGGI), 87–107 (FIHRLLGRMTVLIYIVPLIYF), 119–139 (LPYIIALLLFCVQGFMGWYMV), 154–174 (LAFHLIIAVIIYHILFYQLIK), and 192–212 (LIFSGIAITVIYVQIFLGALV). Histidine 256 is a heme binding site. Transmembrane regions (helical) follow at residues 258–278 (LGSYSVFLVVVVLVICLLTIE), 285–305 (IAYFLMIALLMQISTGIITLL), and 308–328 (VPIIIASIHQLFAIILLSIII). Histidine 316 provides a ligand contact to heme.

Belongs to the COX15/CtaA family. Type 2 subfamily. Interacts with CtaB. Heme b is required as a cofactor.

It is found in the cell membrane. The catalysed reaction is Fe(II)-heme o + 2 A + H2O = Fe(II)-heme a + 2 AH2. The protein operates within porphyrin-containing compound metabolism; heme A biosynthesis; heme A from heme O: step 1/1. Its function is as follows. Catalyzes the conversion of heme O to heme A by two successive hydroxylations of the methyl group at C8. The first hydroxylation forms heme I, the second hydroxylation results in an unstable dihydroxymethyl group, which spontaneously dehydrates, resulting in the formyl group of heme A. The polypeptide is Heme A synthase (Rickettsia akari (strain Hartford)).